We begin with the raw amino-acid sequence, 304 residues long: MSKEIALPLESGKKKIGSTYLKLTKPKVVALMLITAVVGMSLAPVVDFPWLQAAFGLVGIGLMAGSAAAFNHLIDRRIDARMARTHKRPLPSGDTNPISVAIFSTALGVIGFVLLYALVNPLTAWMTFLSLLGYAVVYTMYLKRATPQNIVIAGIAGAMPPLLGWTAVTGELHAHAWLLVMIIFIWTPPHFWAIAIHRVEDYRKVDIPMLPVTHGIEYTKTSILLYTILLTLVCILPVLVGMVGSVYLFSSLLLNAGFMYHAWKLKLSPEQNSAMETFKFSIYHLLALFVALLADHYLGLFFTP.

Transmembrane regions (helical) follow at residues 28–48 (VVALMLITAVVGMSLAPVVDF), 50–70 (WLQAAFGLVGIGLMAGSAAAF), 98–118 (ISVAIFSTALGVIGFVLLYAL), 122–142 (LTAWMTFLSLLGYAVVYTMYL), 150–170 (IVIAGIAGAMPPLLGWTAVTG), 176–196 (AWLLVMIIFIWTPPHFWAIAI), 223–243 (ILLYTILLTLVCILPVLVGMV), 245–265 (SVYLFSSLLLNAGFMYHAWKL), and 282–302 (IYHLLALFVALLADHYLGLFF).

It belongs to the UbiA prenyltransferase family. Protoheme IX farnesyltransferase subfamily.

Its subcellular location is the cell inner membrane. It carries out the reaction heme b + (2E,6E)-farnesyl diphosphate + H2O = Fe(II)-heme o + diphosphate. Its pathway is porphyrin-containing compound metabolism; heme O biosynthesis; heme O from protoheme: step 1/1. Its function is as follows. Converts heme B (protoheme IX) to heme O by substitution of the vinyl group on carbon 2 of heme B porphyrin ring with a hydroxyethyl farnesyl side group. This chain is Protoheme IX farnesyltransferase 2, found in Vibrio campbellii (strain ATCC BAA-1116).